Here is a 603-residue protein sequence, read N- to C-terminus: Peroxisomal targeting signal receptor (603 aa).

C10 is covalently cross-linked (Glycyl cysteine thioester (Cys-Gly) (interchain with G-Cter in ubiquitin)). An amphipathic helix 1 (AH1) region spans residues 11 to 33 (SANSNAIAQFNKHTQQDRSLQRQ). K22 is covalently cross-linked (Glycyl lysine isopeptide (Lys-Gly) (interchain with G-Cter in ubiquitin)). Residues 23 to 49 (HTQQDRSLQRQAANQQGIVQNGQGFKK) form a disordered region. The span at 31-45 (QRQAANQQGIVQNGQ) shows a compositional bias: polar residues. Residues 58–76 (RQNMDQFMNNGPSQSNFQF) form an amphipathic helix 2 (AH2) region. 3 consecutive short sequence motifs (wxxxF/Y motif) follow at residues 99-103 (WTNEF), 128-132 (WATEF), and 192-196 (WDNQF). The interval 232–248 (FQEVWDSLNSEEVENDF) is amphipathic helix 4 (AH4). Residues 271-275 (WEKDF) carry the WxxxF/Y motif 4 motif. TPR repeat units lie at residues 304–338 (ESDPYEIGLQLMENGAKLSEAALAFEAAIQRNEGH), 339–372 (INAWLKLGEVQTQNEKEIAGISALEKCLELHPEN), 449–482 (PDVQMGLGVLFYANEDFDKTIDCFKAALSIKPDD), 484–516 (VLWNRLGASLANSNRSEEAVDAYFKALELKPTF), and 518–550 (RARYNLGVSCINIGCYKEAAEHLLSGLSMHQVE).

This sequence belongs to the peroxisomal targeting signal receptor family. Interacts (via WxxxF/Y and LVxEF motifs) with PEX14; promoting translocation through the PEX13-PEX14 docking complex. Post-translationally, monoubiquitinated at Cys-10 by PEX2 during PEX5 passage through the retrotranslocation channel: monoubiquitination acts as a signal for PEX5 extraction and is required for proper export from peroxisomes and recycling. When PEX5 recycling is compromised, polyubiquitinated at Lys-22 by PEX10 during its passage through the retrotranslocation channel, leading to its degradation.

It is found in the cytoplasm. The protein localises to the cytosol. It localises to the peroxisome matrix. Functionally, receptor that mediates peroxisomal import of proteins containing a C-terminal PTS1-type tripeptide peroxisomal targeting signal (SKL-type). Binds to cargo proteins containing a PTS1 peroxisomal targeting signal in the cytosol, and translocates them into the peroxisome matrix by passing through the PEX13-PEX14 docking complex along with cargo proteins. PEX5 receptor is then retrotranslocated into the cytosol, leading to release of bound cargo in the peroxisome matrix, and reset for a subsequent peroxisome import cycle. This is Peroxisomal targeting signal receptor (PEX5) from Debaryomyces hansenii (strain ATCC 36239 / CBS 767 / BCRC 21394 / JCM 1990 / NBRC 0083 / IGC 2968) (Yeast).